The chain runs to 256 residues: Thiazole synthase (256 aa).

The Schiff-base intermediate with DXP role is filled by lysine 95. 1-deoxy-D-xylulose 5-phosphate-binding positions include glycine 156, 182–183 (AG), and 204–205 (NT).

Belongs to the ThiG family. Homotetramer. Forms heterodimers with either ThiH or ThiS.

Its subcellular location is the cytoplasm. It catalyses the reaction [ThiS sulfur-carrier protein]-C-terminal-Gly-aminoethanethioate + 2-iminoacetate + 1-deoxy-D-xylulose 5-phosphate = [ThiS sulfur-carrier protein]-C-terminal Gly-Gly + 2-[(2R,5Z)-2-carboxy-4-methylthiazol-5(2H)-ylidene]ethyl phosphate + 2 H2O + H(+). Its pathway is cofactor biosynthesis; thiamine diphosphate biosynthesis. Its function is as follows. Catalyzes the rearrangement of 1-deoxy-D-xylulose 5-phosphate (DXP) to produce the thiazole phosphate moiety of thiamine. Sulfur is provided by the thiocarboxylate moiety of the carrier protein ThiS. In vitro, sulfur can be provided by H(2)S. This is Thiazole synthase from Escherichia coli (strain K12 / MC4100 / BW2952).